Consider the following 67-residue polypeptide: uncharacterized protein (67 aa).

This is an uncharacterized protein from Dictyostelium discoideum (Social amoeba).